The following is a 322-amino-acid chain: Formimidoylglutamase (322 aa).

Mn(2+)-binding residues include His-130, Asp-156, His-158, Asp-160, Cys-244, and Asp-246.

This sequence belongs to the arginase family. It depends on Mn(2+) as a cofactor.

The catalysed reaction is N-formimidoyl-L-glutamate + H2O = formamide + L-glutamate. Its pathway is amino-acid degradation; L-histidine degradation into L-glutamate; L-glutamate from N-formimidoyl-L-glutamate (hydrolase route): step 1/1. Functionally, catalyzes the conversion of N-formimidoyl-L-glutamate to L-glutamate and formamide. This is Formimidoylglutamase from Geobacillus thermodenitrificans (strain NG80-2).